Consider the following 464-residue polypeptide: tRNA-2-methylthio-N(6)-dimethylallyladenosine synthase (464 aa).

One can recognise an MTTase N-terminal domain in the interval 19 to 135; the sequence is GSYWITTFGC…LENLLGKVDL (117 aa). Residues Cys-28, Cys-64, Cys-98, Cys-170, Cys-174, and Cys-177 each coordinate [4Fe-4S] cluster. The region spanning 156–394 is the Radical SAM core domain; sequence RESSICGWVN…DLVEKTARSR (239 aa). The TRAM domain maps to 396–464; sequence KRYINNIESV…PFSLTGELYL (69 aa).

Belongs to the methylthiotransferase family. MiaB subfamily. Monomer. [4Fe-4S] cluster is required as a cofactor.

Its subcellular location is the cytoplasm. It catalyses the reaction N(6)-dimethylallyladenosine(37) in tRNA + (sulfur carrier)-SH + AH2 + 2 S-adenosyl-L-methionine = 2-methylsulfanyl-N(6)-dimethylallyladenosine(37) in tRNA + (sulfur carrier)-H + 5'-deoxyadenosine + L-methionine + A + S-adenosyl-L-homocysteine + 2 H(+). Catalyzes the methylthiolation of N6-(dimethylallyl)adenosine (i(6)A), leading to the formation of 2-methylthio-N6-(dimethylallyl)adenosine (ms(2)i(6)A) at position 37 in tRNAs that read codons beginning with uridine. In Prochlorococcus marinus (strain AS9601), this protein is tRNA-2-methylthio-N(6)-dimethylallyladenosine synthase.